A 426-amino-acid chain; its full sequence is Kelch repeat-containing protein At3g27220 (426 aa).

Residues 18 to 38 (LMLVLYFTSVLGIGFIAAFLC) traverse the membrane as a helical segment. Kelch repeat units follow at residues 123–170 (LLYV…IVTD), 173–222 (YVYV…IWRG), 224–275 (LHVM…VAND), 276–338 (KLLV…WIIV), and 341–394 (SIVI…FWNG).

The protein localises to the membrane. In Arabidopsis thaliana (Mouse-ear cress), this protein is Kelch repeat-containing protein At3g27220.